The primary structure comprises 393 residues: Probable protein phosphatase 2C 72 (393 aa).

The PPM-type phosphatase domain occupies 49-357 (EFSMAVVQAN…DDITVVVVFF (309 aa)). Positions 88 and 89 each coordinate Mn(2+). The helical transmembrane segment at 147–167 (LAAVGSCCLVGVICAGNLYIA) threads the bilayer. Positions 289 and 348 each coordinate Mn(2+).

This sequence belongs to the PP2C family. Requires Mg(2+) as cofactor. It depends on Mn(2+) as a cofactor.

The protein localises to the membrane. It carries out the reaction O-phospho-L-seryl-[protein] + H2O = L-seryl-[protein] + phosphate. The enzyme catalyses O-phospho-L-threonyl-[protein] + H2O = L-threonyl-[protein] + phosphate. The sequence is that of Probable protein phosphatase 2C 72 from Oryza sativa subsp. japonica (Rice).